Reading from the N-terminus, the 84-residue chain is RNA-binding protein Hfq (84 aa).

The Sm domain occupies 10–69 (DPFLNILRKERIPVSIYLVNGIKLQGQIDSFDQYVVLLKNSVTQMVYKHAISTIVPAKAI).

Belongs to the Hfq family. In terms of assembly, homohexamer.

In terms of biological role, RNA chaperone that binds small regulatory RNA (sRNAs) and mRNAs to facilitate mRNA translational regulation in response to envelope stress, environmental stress and changes in metabolite concentrations. Also binds with high specificity to tRNAs. The protein is RNA-binding protein Hfq of Nitrosomonas europaea (strain ATCC 19718 / CIP 103999 / KCTC 2705 / NBRC 14298).